The primary structure comprises 437 residues: Nickel-cobalt-cadmium resistance protein NccC (437 aa).

Residues 1-48 (MGAVLKAEANIFRSHPFRPMNQATPKKLRSAPCIGVALLLMATGSIQA) form the signal peptide.

It belongs to the outer membrane factor (OMF) (TC 1.B.17) family.

Functionally, component of the NCC cation-efflux system that confers resistance to nickel, cobalt and cadmium. This chain is Nickel-cobalt-cadmium resistance protein NccC (nccC), found in Alcaligenes xylosoxydans xylosoxydans (Achromobacter xylosoxidans).